Here is a 254-residue protein sequence, read N- to C-terminus: Cell division protein DivIB (254 aa).

At 1–21 (MPNAQIPVLKKNRTKKRTSRK) the chain is on the cytoplasmic side. The helical transmembrane segment at 22–42 (IAILLILLFIVLLAVLFFRSS) threads the bilayer. Topologically, residues 43-254 (LSRVSEIRFD…EEGQEKDTTQ (212 aa)) are extracellular. Residues 44 to 112 (SRVSEIRFDG…GIIAIHIKEF (69 aa)) enclose the POTRA domain.

It belongs to the FtsQ/DivIB family. DivIB subfamily.

The protein resides in the cell membrane. Its function is as follows. Cell division protein that may be involved in stabilizing or promoting the assembly of the division complex. The sequence is that of Cell division protein DivIB from Paenibacillus polymyxa (strain E681).